A 42-amino-acid chain; its full sequence is Photosystem I reaction center subunit IX (42 aa).

The helical transmembrane segment at 7-27 threads the bilayer; it reads YLSTAPVLAALSLGFLAGLLI.

It belongs to the PsaJ family.

The protein resides in the plastid. The protein localises to the chloroplast thylakoid membrane. In terms of biological role, may help in the organization of the PsaE and PsaF subunits. The sequence is that of Photosystem I reaction center subunit IX from Cryptomeria japonica (Japanese cedar).